A 272-amino-acid chain; its full sequence is Acetylglutamate kinase (272 aa).

Substrate-binding positions include 46-47 (GA), arginine 68, and asparagine 166.

This sequence belongs to the acetylglutamate kinase family. ArgB subfamily.

The protein resides in the cytoplasm. It carries out the reaction N-acetyl-L-glutamate + ATP = N-acetyl-L-glutamyl 5-phosphate + ADP. The protein operates within amino-acid biosynthesis; L-arginine biosynthesis; N(2)-acetyl-L-ornithine from L-glutamate: step 2/4. Its function is as follows. Catalyzes the ATP-dependent phosphorylation of N-acetyl-L-glutamate. This chain is Acetylglutamate kinase, found in Dehalococcoides mccartyi (strain ATCC BAA-2100 / JCM 16839 / KCTC 5957 / BAV1).